The chain runs to 55 residues: Large ribosomal subunit protein bL33 (55 aa).

The protein belongs to the bacterial ribosomal protein bL33 family.

The chain is Large ribosomal subunit protein bL33 from Aliivibrio fischeri (strain ATCC 700601 / ES114) (Vibrio fischeri).